The chain runs to 282 residues: 4-hydroxy-tetrahydrodipicolinate reductase (282 aa).

Residues 14 to 19 (GAMGRM) and 115 to 117 (GTT) each bind NAD(+). H171 (proton donor/acceptor) is an active-site residue. H172 is a binding site for (S)-2,3,4,5-tetrahydrodipicolinate. K175 (proton donor) is an active-site residue. Position 181-182 (181-182 (GT)) interacts with (S)-2,3,4,5-tetrahydrodipicolinate.

The protein belongs to the DapB family.

The protein resides in the cytoplasm. It carries out the reaction (S)-2,3,4,5-tetrahydrodipicolinate + NAD(+) + H2O = (2S,4S)-4-hydroxy-2,3,4,5-tetrahydrodipicolinate + NADH + H(+). It catalyses the reaction (S)-2,3,4,5-tetrahydrodipicolinate + NADP(+) + H2O = (2S,4S)-4-hydroxy-2,3,4,5-tetrahydrodipicolinate + NADPH + H(+). The protein operates within amino-acid biosynthesis; L-lysine biosynthesis via DAP pathway; (S)-tetrahydrodipicolinate from L-aspartate: step 4/4. Functionally, catalyzes the conversion of 4-hydroxy-tetrahydrodipicolinate (HTPA) to tetrahydrodipicolinate. The chain is 4-hydroxy-tetrahydrodipicolinate reductase from Prochlorococcus marinus (strain NATL2A).